The chain runs to 286 residues: Acyl-CoA-binding domain-containing protein 6 (286 aa).

Positions 1–24 (MASPGVLEESSSGEACSGGCPEQW) are disordered. The segment covering 8 to 22 (EESSSGEACSGGCPE) has biased composition (low complexity). The ACB domain maps to 32–117 (LQGQFEQAAK…VKKLDPDWSP (86 aa)). Residues 59 to 63 (YARYK), K85, and Y104 contribute to the an acyl-CoA site. ANK repeat units follow at residues 182-211 (EGRC…HINM) and 215-244 (EGQT…DPSL).

It is found in the cytoplasm. Its subcellular location is the nucleus. Functionally, binds long-chain acyl-coenzyme A molecules with a strong preference for unsaturated C18:1-CoA. Does not bind fatty acids. Plays a role in protein N-myristoylation. This Xenopus tropicalis (Western clawed frog) protein is Acyl-CoA-binding domain-containing protein 6 (acbd6).